Reading from the N-terminus, the 202-residue chain is uncharacterized protein (202 aa).

This is an uncharacterized protein from Treponema pallidum (strain Nichols).